Reading from the N-terminus, the 235-residue chain is Uridylate kinase (235 aa).

Position 9-12 (9-12 (KLSG)) interacts with ATP. G51 serves as a coordination point for UMP. Positions 52 and 56 each coordinate ATP. UMP-binding positions include D71 and 132 to 139 (TGNPYFTT). Residues T159, Y165, and D168 each contribute to the ATP site.

The protein belongs to the UMP kinase family. In terms of assembly, homohexamer.

The protein localises to the cytoplasm. It carries out the reaction UMP + ATP = UDP + ADP. Its pathway is pyrimidine metabolism; CTP biosynthesis via de novo pathway; UDP from UMP (UMPK route): step 1/1. Inhibited by UTP. Functionally, catalyzes the reversible phosphorylation of UMP to UDP. In Flavobacterium psychrophilum (strain ATCC 49511 / DSM 21280 / CIP 103535 / JIP02/86), this protein is Uridylate kinase.